The following is a 130-amino-acid chain: Small ribosomal subunit protein uS9 (130 aa).

It belongs to the universal ribosomal protein uS9 family.

This Anaeromyxobacter dehalogenans (strain 2CP-1 / ATCC BAA-258) protein is Small ribosomal subunit protein uS9.